Consider the following 1536-residue polypeptide: Glycogen debranching enzyme (1536 aa).

Catalysis depends on residues Asp535, His538, and Asp670.

This sequence belongs to the glycogen debranching enzyme family. Interacts with IGD1.

The protein localises to the mitochondrion. It is found in the cytoplasm. The catalysed reaction is Transfers a segment of a (1-&gt;4)-alpha-D-glucan to a new position in an acceptor, which may be glucose or a (1-&gt;4)-alpha-D-glucan.. It carries out the reaction Hydrolysis of (1-&gt;6)-alpha-D-glucosidic branch linkages in glycogen phosphorylase limit dextrin.. Activity is inhibited by IGD1. Its function is as follows. Multifunctional enzyme acting as 1,4-alpha-D-glucan:1,4-alpha-D-glucan 4-alpha-D-glycosyltransferase and amylo-1,6-glucosidase in glycogen degradation. This is Glycogen debranching enzyme (GDB1) from Saccharomyces cerevisiae (strain ATCC 204508 / S288c) (Baker's yeast).